We begin with the raw amino-acid sequence, 554 residues long: uncharacterized protein (554 aa).

The first 33 residues, 1 to 33 (MKKILIIILFIIIFIVLIYSGLWFVIMFSLSHS), serve as a signal peptide directing secretion.

This is an uncharacterized protein from Rickettsia prowazekii (strain Madrid E).